The primary structure comprises 425 residues: UDP-N-acetylglucosamine 1-carboxyvinyltransferase (425 aa).

Lys31 to Asn32 contributes to the phosphoenolpyruvate binding site. Arg100 lines the UDP-N-acetyl-alpha-D-glucosamine pocket. Cys124 serves as the catalytic Proton donor. Cys124 is modified (2-(S-cysteinyl)pyruvic acid O-phosphothioketal). UDP-N-acetyl-alpha-D-glucosamine-binding positions include Arg129–Gln133, Thr170–Thr172, Asp311, and Ile333.

Belongs to the EPSP synthase family. MurA subfamily.

The protein resides in the cytoplasm. The enzyme catalyses phosphoenolpyruvate + UDP-N-acetyl-alpha-D-glucosamine = UDP-N-acetyl-3-O-(1-carboxyvinyl)-alpha-D-glucosamine + phosphate. It participates in cell wall biogenesis; peptidoglycan biosynthesis. Cell wall formation. Adds enolpyruvyl to UDP-N-acetylglucosamine. The polypeptide is UDP-N-acetylglucosamine 1-carboxyvinyltransferase (Aquifex aeolicus (strain VF5)).